The chain runs to 465 residues: Glutamate--tRNA ligase 1 (465 aa).

Positions Pro-8–Asn-18 match the 'HIGH' region motif. Positions Pro-249 to Arg-253 match the 'KMSKS' region motif. Lys-252 contributes to the ATP binding site.

Belongs to the class-I aminoacyl-tRNA synthetase family. Glutamate--tRNA ligase type 1 subfamily. As to quaternary structure, monomer.

It is found in the cytoplasm. It carries out the reaction tRNA(Glu) + L-glutamate + ATP = L-glutamyl-tRNA(Glu) + AMP + diphosphate. In terms of biological role, catalyzes the attachment of glutamate to tRNA(Glu) in a two-step reaction: glutamate is first activated by ATP to form Glu-AMP and then transferred to the acceptor end of tRNA(Glu). This is Glutamate--tRNA ligase 1 from Coxiella burnetii (strain CbuG_Q212) (Coxiella burnetii (strain Q212)).